We begin with the raw amino-acid sequence, 386 residues long: NADH-ubiquinone oxidoreductase chain 4 (386 aa).

The next 11 membrane-spanning stretches (helical) occupy residues 8-28, 37-57, 61-81, 91-111, 133-153, 167-187, 189-209, 219-239, 247-267, 283-303, and 315-335; these read SEFHLEWGITLLTLNFSYFLF, WPLSYSTILVSLFVLLWLTFT, FILFYVFFECSLIPTIILILG, ASYYFLFYTLLSSLPLLFIII, IFLLAILSFLVKLPVYFAHIW, MVLAAILLKLGGYGLYLVQVL, IYSETTLMGVCLMGGIFSCLI, LIAYSSVAHMSFVILGMLMSC, ILMMVSHGICSSGLFYLSYLF, ISLFPYLCFWWLSLSFLNMGL, and FFIGAFSLDWMVVGLSGILCF.

The protein belongs to the complex I subunit 4 family.

Its subcellular location is the mitochondrion membrane. The catalysed reaction is a ubiquinone + NADH + 5 H(+)(in) = a ubiquinol + NAD(+) + 4 H(+)(out). Its function is as follows. Core subunit of the mitochondrial membrane respiratory chain NADH dehydrogenase (Complex I) that is believed to belong to the minimal assembly required for catalysis. Complex I functions in the transfer of electrons from NADH to the respiratory chain. The immediate electron acceptor for the enzyme is believed to be ubiquinone. The protein is NADH-ubiquinone oxidoreductase chain 4 (ND4) of Artemia franciscana (Brine shrimp).